A 703-amino-acid chain; its full sequence is Pentatricopeptide repeat-containing protein At1g22830 (703 aa).

15 PPR repeats span residues 82–116 (VLYS…GLEF), 117–147 (DSVL…SEIL), 148–182 (HPLP…GIRA), 183–217 (DEFT…SHRC), 218–248 (NLYV…MSER), 249–283 (DAVS…GVEA), 284–318 (SIVT…NVRI), 319–353 (GSVA…CSFS), 356–386 (IDNV…VEAN), 387–421 (SLST…GFHP), 422–452 (NHIT…ILRR), 458–488 (CLIL…MRKR), 489–523 (DKVT…GIKP), 524–554 (DHVT…MEHV), and 560–594 (RLEH…PSSA). Residues 595–671 (MCATLLKACL…AHEFALMETD (77 aa)) are type E motif. Residues 671–703 (DSELDGENNKPMNDDSVINQEQSSDEERLVEVG) are disordered.

It belongs to the PPR family. PCMP-E subfamily.

The protein is Pentatricopeptide repeat-containing protein At1g22830 (PCMP-E24) of Arabidopsis thaliana (Mouse-ear cress).